The primary structure comprises 737 residues: Ribosome-releasing factor 2, mitochondrial (737 aa).

A mitochondrion-targeting transit peptide spans 1 to 36; that stretch reads MLCNRLHKAAFAARLRPRLPATVASCRQVHNSDGTI. The tr-type G domain maps to 39–318; sequence KRIRNIGILA…SVLNFLPAPS (280 aa). GTP is bound by residues 48–55, 112–116, and 166–169; these read AHIDAGKT, DTPGH, and NKMD.

It belongs to the TRAFAC class translation factor GTPase superfamily. Classic translation factor GTPase family. EF-G/EF-2 subfamily.

It is found in the mitochondrion. Mitochondrial GTPase that mediates the disassembly of ribosomes from messenger RNA at the termination of mitochondrial protein biosynthesis. Not involved in the GTP-dependent ribosomal translocation step during translation elongation. This Anopheles gambiae (African malaria mosquito) protein is Ribosome-releasing factor 2, mitochondrial.